The primary structure comprises 348 residues: Protein pelota homolog (348 aa).

The protein belongs to the eukaryotic release factor 1 family. Pelota subfamily. In terms of assembly, monomer. The cofactor is a divalent metal cation.

It is found in the cytoplasm. Functionally, may function in recognizing stalled ribosomes, interact with stem-loop structures in stalled mRNA molecules, and effect endonucleolytic cleavage of the mRNA. May play a role in the release non-functional ribosomes and degradation of damaged mRNAs. Has endoribonuclease activity. The polypeptide is Protein pelota homolog (Methanococcus aeolicus (strain ATCC BAA-1280 / DSM 17508 / OCM 812 / Nankai-3)).